The primary structure comprises 1097 residues: DNA-directed RNA polymerase subunit beta (1097 aa).

Residues 1073-1097 (DINPRRNTPSRPTYESLGTSEYEED) form a disordered region. A compositionally biased stretch (polar residues) spans 1077–1091 (RRNTPSRPTYESLGT).

This sequence belongs to the RNA polymerase beta chain family. In cyanobacteria the RNAP catalytic core is composed of 2 alpha, 1 beta, 1 beta', 1 gamma and 1 omega subunit. When a sigma factor is associated with the core the holoenzyme is formed, which can initiate transcription.

It carries out the reaction RNA(n) + a ribonucleoside 5'-triphosphate = RNA(n+1) + diphosphate. In terms of biological role, DNA-dependent RNA polymerase catalyzes the transcription of DNA into RNA using the four ribonucleoside triphosphates as substrates. This is DNA-directed RNA polymerase subunit beta from Prochlorococcus marinus (strain MIT 9312).